The sequence spans 352 residues: Quinolinate synthase (352 aa).

2 residues coordinate iminosuccinate: His48 and Ser69. Cys114 is a [4Fe-4S] cluster binding site. Iminosuccinate-binding positions include 140-142 and Ser157; that span reads YAN. [4Fe-4S] cluster is bound at residue Cys201. Residues 227–229 and Thr244 each bind iminosuccinate; that span reads HPE. Cys298 contacts [4Fe-4S] cluster.

It belongs to the quinolinate synthase family. Type 1 subfamily. It depends on [4Fe-4S] cluster as a cofactor.

The protein localises to the cytoplasm. It carries out the reaction iminosuccinate + dihydroxyacetone phosphate = quinolinate + phosphate + 2 H2O + H(+). It functions in the pathway cofactor biosynthesis; NAD(+) biosynthesis; quinolinate from iminoaspartate: step 1/1. Catalyzes the condensation of iminoaspartate with dihydroxyacetone phosphate to form quinolinate. The sequence is that of Quinolinate synthase from Pseudomonas putida (strain GB-1).